The chain runs to 411 residues: LL-diaminopimelate aminotransferase (411 aa).

The substrate site is built by tyrosine 15 and glycine 42. Pyridoxal 5'-phosphate is bound by residues tyrosine 72, 108-109, tyrosine 132, asparagine 187, tyrosine 218, and 246-248; these read SK and SFS. Residues lysine 109, tyrosine 132, and asparagine 187 each coordinate substrate. N6-(pyridoxal phosphate)lysine is present on lysine 249. Arginine 257 and asparagine 292 together coordinate pyridoxal 5'-phosphate. Substrate contacts are provided by asparagine 292 and arginine 388.

The protein belongs to the class-I pyridoxal-phosphate-dependent aminotransferase family. LL-diaminopimelate aminotransferase subfamily. Homodimer. It depends on pyridoxal 5'-phosphate as a cofactor.

It catalyses the reaction (2S,6S)-2,6-diaminopimelate + 2-oxoglutarate = (S)-2,3,4,5-tetrahydrodipicolinate + L-glutamate + H2O + H(+). The protein operates within amino-acid biosynthesis; L-lysine biosynthesis via DAP pathway; LL-2,6-diaminopimelate from (S)-tetrahydrodipicolinate (aminotransferase route): step 1/1. Functionally, involved in the synthesis of meso-diaminopimelate (m-DAP or DL-DAP), required for both lysine and peptidoglycan biosynthesis. Catalyzes the direct conversion of tetrahydrodipicolinate to LL-diaminopimelate. The polypeptide is LL-diaminopimelate aminotransferase (Synechococcus sp. (strain JA-3-3Ab) (Cyanobacteria bacterium Yellowstone A-Prime)).